The chain runs to 179 residues: MIIYKDIISGDEVLSDTYNIKTVDGVLYECDCRKYLKKTNEDFELEGANPSAEGGDDEGGAEGGEVMVHDIEDQFRLVWLKAEDGAKPPKDAFKGHLKTYMKKVLKALQDKGAPDETINEFKKGAPAAVNKILKNYDNYDVLMGESMDGDAMHILIDFREDGVTPYATLWKHGLEEMKV.

The TCTP domain maps to 1-179; sequence MIIYKDIISG…WKHGLEEMKV (179 aa).

This sequence belongs to the TCTP family.

It is found in the cytoplasm. Its subcellular location is the cytoskeleton. Its function is as follows. Involved in protein synthesis. Involved in microtubule stabilization. Involved in osmoadaptation. This chain is Translationally-controlled tumor protein homolog, found in Emericella nidulans (strain FGSC A4 / ATCC 38163 / CBS 112.46 / NRRL 194 / M139) (Aspergillus nidulans).